A 334-amino-acid polypeptide reads, in one-letter code: Zinc finger Ran-binding domain-containing protein 2 (334 aa).

RanBP2-type zinc fingers lie at residues 9-40 and 65-94; these read SDGD…EKTT and SAND…PKYA. The interval 117–334 is disordered; it reads REESDGEYDE…SGSRTSSKKK (218 aa). Residues 150-163 are compositionally biased toward acidic residues; the sequence is DKESEGEDEEDEDG. Positions 196 to 212 are enriched in basic residues; that stretch reads KKKKSNRRSRSKSRSSH. Low complexity-rich tracts occupy residues 213–224 and 258–285; these read SRSSSRSSSHSS and SRSS…SSSP. A compositionally biased stretch (basic residues) spans 302–318; it reads RKKRRSRSRSPERRRRS. The span at 319–334 shows a compositional bias: low complexity; the sequence is SSGSSHSGSRTSSKKK.

Belongs to the ZRANB2 family.

The protein localises to the nucleus. Functionally, may regulate alternative splicing by interfering with constitutive 5'-splice site selection. In Gallus gallus (Chicken), this protein is Zinc finger Ran-binding domain-containing protein 2.